Consider the following 396-residue polypeptide: Putative N(4)-(beta-N-acetylglucosaminyl)-L-asparaginase GE19290 (396 aa).

A signal peptide spans 1–23 (MKRHLKACLWVLCFASTALSSLA). Disulfide bonds link Cys-100–Cys-105 and Cys-199–Cys-215. Residue Thr-246 is the Nucleophile of the active site. Residues 274-277 (RVGD) and 297-300 (TGDG) contribute to the substrate site. The cysteines at positions 357 and 384 are disulfide-linked.

The protein belongs to the Ntn-hydrolase family. In terms of assembly, heterotetramer of two alpha and two beta chains arranged as a dimer of alpha/beta heterodimers. Cleaved into an alpha and beta chain by autocatalysis; this activates the enzyme. The N-terminal residue of the beta subunit is responsible for the nucleophile hydrolase activity.

The enzyme catalyses N(4)-(beta-N-acetyl-D-glucosaminyl)-L-asparagine + H2O = N-acetyl-beta-D-glucosaminylamine + L-aspartate + H(+). Functionally, cleaves the GlcNAc-Asn bond which joins oligosaccharides to the peptide of asparagine-linked glycoproteins. The protein is Putative N(4)-(beta-N-acetylglucosaminyl)-L-asparaginase GE19290 of Drosophila yakuba (Fruit fly).